A 168-amino-acid polypeptide reads, in one-letter code: Photosystem I assembly protein Ycf3 (168 aa).

TPR repeat units lie at residues Ala35–Pro68, Ser72–Leu105, and Gly120–Asn153.

The protein belongs to the Ycf3 family.

Its subcellular location is the plastid membrane. Its function is as follows. Essential for the assembly of the photosystem I (PSI) complex. May act as a chaperone-like factor to guide the assembly of the PSI subunits. The sequence is that of Photosystem I assembly protein Ycf3 from Cuscuta gronovii (Common dodder).